The chain runs to 471 residues: Citrate synthase, mitochondrial (471 aa).

Residues histidine 309, histidine 355, and aspartate 409 contribute to the active site.

This sequence belongs to the citrate synthase family. As to quaternary structure, homodimer. Ubiquitous.

It localises to the mitochondrion matrix. It carries out the reaction oxaloacetate + acetyl-CoA + H2O = citrate + CoA + H(+). The protein operates within carbohydrate metabolism; tricarboxylic acid cycle; isocitrate from oxaloacetate: step 1/2. The sequence is that of Citrate synthase, mitochondrial from Solanum tuberosum (Potato).